The sequence spans 88 residues: Small ribosomal subunit protein uS15c (88 aa).

The protein belongs to the universal ribosomal protein uS15 family. Part of the 30S ribosomal subunit.

Its subcellular location is the plastid. It is found in the chloroplast. In Lepidium virginicum (Virginia pepperweed), this protein is Small ribosomal subunit protein uS15c (rps15).